Here is a 26-residue protein sequence, read N- to C-terminus: Dermaseptin-J1 (26 aa).

Valine amide is present on V26.

Expressed by the skin glands.

It localises to the secreted. In terms of biological role, has antimicrobial activity. The chain is Dermaseptin-J1 from Phasmahyla jandaia (Jandaia leaf frog).